We begin with the raw amino-acid sequence, 863 residues long: Glycerol-3-phosphate acyltransferase (863 aa).

The disordered stretch occupies residues 1–29; that stretch reads MPKKNSPLLPKETTTTQSSVDTSGSSNLT. Residues 12 to 29 are compositionally biased toward polar residues; sequence ETTTTQSSVDTSGSSNLT. The HXXXXD motif motif lies at 343-348; that stretch reads SHRSHM.

This sequence belongs to the GPAT/DAPAT family.

It localises to the cell inner membrane. The enzyme catalyses sn-glycerol 3-phosphate + an acyl-CoA = a 1-acyl-sn-glycero-3-phosphate + CoA. Its pathway is phospholipid metabolism; CDP-diacylglycerol biosynthesis; CDP-diacylglycerol from sn-glycerol 3-phosphate: step 1/3. The protein is Glycerol-3-phosphate acyltransferase of Xylella fastidiosa (strain M23).